The following is a 530-amino-acid chain: MAMVTPGLWANFSHSSHELGIANGFEFLNSLLVAYRLPGLLLLFSITIILFQPLRKKSDLPLINSGKGPFSILRGYRSRKTFAAELPRLVAEGLSKASAFRIAAPDGVNIVLAPSYAHEIGEHPDLNPGPIAGDEFNCHIDGFEVFAQLGTSDVISESVRTRLTRQLTKLTPLLTSETALLLQSQWKDAPNWVEVSPHETAMFILSRLSSLVFVGDDLGRNPDWVHILTSYNNEAFAAAEELNLWPQILRPLVAHLKPSCRQLRRYIRDARALLIPVIEQRHHAQSQGDRREYNDAIEWLNETSHSLAQSYDPLLSQMLLAIGSFHTSSDLLGQVLLDLCMRQDWEVLVGELRKEIISSLQGVGWDKISLNNLKLMDSVLKESQRLKPASTVTMGRYASREIILSDGTRIPKGSTVFIANVAMRDPNIYPDPDVFIPDRFTTRREKGDSSAYLVSASPEHIGFGLGRHACPGRFFAANEVKIVLSHMLLKYDIKLPDNGAAVAPSTSGIFLETNPNARICVRRRKEEILI.

The chain crosses the membrane as a helical span at residues leucine 31–phenylalanine 51. Cysteine 470 is a binding site for heme.

Belongs to the cytochrome P450 family. Requires heme as cofactor.

It localises to the membrane. Its pathway is secondary metabolite biosynthesis; terpenoid biosynthesis. Its function is as follows. Cytochrome P450 monooxygenase; part of the gene cluster B that mediates the biosynthesis of the fungal meroterpenoid acetoxydehydroaustin. The first step of the pathway is the synthesis of 3,5-dimethylorsellinic acid by the polyketide synthase ausA. 3,5-dimethylorsellinic acid is then prenylated by the polyprenyl transferase ausN. Further epoxidation by the FAD-dependent monooxygenase ausM and cyclization by the probable terpene cyclase ausL lead to the formation of protoaustinoid A. Protoaustinoid A is then oxidized to spiro-lactone preaustinoid A3 by the combined action of the FAD-binding monooxygenases ausB and ausC, and the dioxygenase ausE. Acid-catalyzed keto-rearrangement and ring contraction of the tetraketide portion of preaustinoid A3 by ausJ lead to the formation of preaustinoid A4. The aldo-keto reductase ausK, with the help of ausH, is involved in the next step by transforming preaustinoid A4 into isoaustinone which is in turn hydroxylated by the P450 monooxygenase ausI to form austinolide. The cytochrome P450 monooxygenase ausG then modifies austinolide to austinol. Austinol is further acetylated to austin by the O-acetyltransferase ausP, which spontaneously changes to dehydroaustin. The cytochrome P450 monooxygenase then converts dehydroaustin is into 7-dehydrodehydroaustin. The hydroxylation catalyzed by ausR permits the second O-acetyltransferase ausQ to add an additional acetyl group to the molecule, leading to the formation of acetoxydehydroaustin. Due to genetic rearrangements of the clusters and the subsequent loss of some enzymes, the end product of the Penicillium brasilianum austinoid biosynthesis clusters is acetoxydehydroaustin. The sequence is that of Cytochrome P450 monooxygenase ausG from Penicillium brasilianum.